We begin with the raw amino-acid sequence, 104 residues long: Large ribosomal subunit protein uL24 (104 aa).

It belongs to the universal ribosomal protein uL24 family. Part of the 50S ribosomal subunit.

In terms of biological role, one of two assembly initiator proteins, it binds directly to the 5'-end of the 23S rRNA, where it nucleates assembly of the 50S subunit. One of the proteins that surrounds the polypeptide exit tunnel on the outside of the subunit. This Mesorhizobium japonicum (strain LMG 29417 / CECT 9101 / MAFF 303099) (Mesorhizobium loti (strain MAFF 303099)) protein is Large ribosomal subunit protein uL24.